Here is a 101-residue protein sequence, read N- to C-terminus: Ribonuclease kappa-B (101 aa).

The next 2 membrane-spanning stretches (helical) occupy residues Ala13 to Phe33 and Val68 to Cys88.

Belongs to the RNase K family.

It localises to the membrane. Its function is as follows. Endoribonuclease which preferentially cleaves ApU and ApG phosphodiester bonds. The sequence is that of Ribonuclease kappa-B (rnasekb) from Danio rerio (Zebrafish).